A 344-amino-acid chain; its full sequence is Phosphoribosylformylglycinamidine cyclo-ligase (344 aa).

It belongs to the AIR synthase family.

The protein localises to the cytoplasm. The enzyme catalyses 2-formamido-N(1)-(5-O-phospho-beta-D-ribosyl)acetamidine + ATP = 5-amino-1-(5-phospho-beta-D-ribosyl)imidazole + ADP + phosphate + H(+). It functions in the pathway purine metabolism; IMP biosynthesis via de novo pathway; 5-amino-1-(5-phospho-D-ribosyl)imidazole from N(2)-formyl-N(1)-(5-phospho-D-ribosyl)glycinamide: step 2/2. The chain is Phosphoribosylformylglycinamidine cyclo-ligase from Bifidobacterium animalis subsp. lactis (strain AD011).